We begin with the raw amino-acid sequence, 1381 residues long: Peroxisomal ATPase PEX6 (1381 aa).

Residues 1–10 (MTAPNSTPAS) show a composition bias toward polar residues. 4 disordered regions span residues 1–23 (MTAPNSTPASSRKRVRRRRQDKP), 247–315 (VRTS…DNLS), 333–374 (TVTG…DRPR), and 467–499 (YSSRSATRSHHSRHDSRNSSFFEAQSQKSNPPA). Residues 11–20 (SRKRVRRRRQ) are compositionally biased toward basic residues. 2 stretches are compositionally biased toward acidic residues: residues 270 to 284 (AEDDEDAYFSAAEED) and 296 to 315 (TDADDTEFEPQAGEDEDNLS). Polar residues-rich tracts occupy residues 333-345 (TVTGQSTIGTGTP), 355-367 (GPGSVISSYTATT), and 487-499 (FFEAQSQKSNPPA). 1031–1038 (GPPGTGKT) contacts ATP. Composition is skewed to basic and acidic residues over residues 1294–1305 (GAKDKDKKKEGA) and 1337–1350 (STKKDGKGKGKAAD). The disordered stretch occupies residues 1294-1381 (GAKDKDKKKE…GGDEDEGLYD (88 aa)). The span at 1372–1381 (GGDEDEGLYD) shows a compositional bias: acidic residues.

It belongs to the AAA ATPase family. Interacts with PEX1; forming the PEX1-PEX6 AAA ATPase complex, which is composed of a heterohexamer formed by a trimer of PEX1-PEX6 dimers.

It localises to the cytoplasm. It is found in the cytosol. The protein localises to the peroxisome membrane. The catalysed reaction is ATP + H2O = ADP + phosphate + H(+). Functionally, component of the PEX1-PEX6 AAA ATPase complex, a protein dislocase complex that mediates the ATP-dependent extraction of the PEX5 receptor from peroxisomal membranes, an essential step for PEX5 recycling. Specifically recognizes PEX5 monoubiquitinated at 'Cys-6', and pulls it out of the peroxisome lumen through the PEX2-PEX10-PEX12 retrotranslocation channel. Extraction by the PEX1-PEX6 AAA ATPase complex is accompanied by unfolding of the TPR repeats and release of bound cargo from PEX5. In Neurospora crassa (strain ATCC 24698 / 74-OR23-1A / CBS 708.71 / DSM 1257 / FGSC 987), this protein is Peroxisomal ATPase PEX6 (pex-6).